The following is a 507-amino-acid chain: ATP synthase subunit alpha, chloroplastic (507 aa).

Glycine 170–threonine 177 contacts ATP.

This sequence belongs to the ATPase alpha/beta chains family. As to quaternary structure, F-type ATPases have 2 components, CF(1) - the catalytic core - and CF(0) - the membrane proton channel. CF(1) has five subunits: alpha(3), beta(3), gamma(1), delta(1), epsilon(1). CF(0) has four main subunits: a, b, b' and c.

The protein resides in the plastid. It is found in the chloroplast thylakoid membrane. It catalyses the reaction ATP + H2O + 4 H(+)(in) = ADP + phosphate + 5 H(+)(out). In terms of biological role, produces ATP from ADP in the presence of a proton gradient across the membrane. The alpha chain is a regulatory subunit. This is ATP synthase subunit alpha, chloroplastic from Tetradesmus obliquus (Green alga).